The chain runs to 1065 residues: Carbamoyl phosphate synthase large chain (1065 aa).

Positions 1 to 401 (MPLDKTIKKV…ALLKAVTSLE (401 aa)) are carboxyphosphate synthetic domain. Residues Arg-129, Arg-169, Gly-175, Gly-176, Gln-208, Val-210, Glu-215, Gly-241, Val-242, His-243, Gln-284, and Glu-298 each coordinate ATP. The 195-residue stretch at 133–327 (KNLMEEIDEP…IAKIAAKIAV (195 aa)) folds into the ATP-grasp 1 domain. Mg(2+)-binding residues include Gln-284, Glu-298, and Asn-300. Gln-284, Glu-298, and Asn-300 together coordinate Mn(2+). The tract at residues 402–548 (GKISGLRLEK…YSSYENEDEN (147 aa)) is oligomerization domain. Residues 549–931 (EVTDDKKIVV…AIYKGFRAAG (383 aa)) are carbamoyl phosphate synthetic domain. The ATP-grasp 2 domain maps to 673–863 (SELLKELNIP…MVKLAVEILT (191 aa)). ATP-binding residues include Arg-709, Lys-748, Ile-750, Glu-754, Gly-779, Val-780, His-781, Ser-782, Gln-822, and Glu-834. Residues Gln-822, Glu-834, and Asn-836 each contribute to the Mg(2+) site. Residues Gln-822, Glu-834, and Asn-836 each coordinate Mn(2+). One can recognise an MGS-like domain in the interval 932-1065 (IEVPKDGGNL…EYRAMKEYFK (134 aa)). Residues 932–1065 (IEVPKDGGNL…EYRAMKEYFK (134 aa)) are allosteric domain.

Belongs to the CarB family. Composed of two chains; the small (or glutamine) chain promotes the hydrolysis of glutamine to ammonia, which is used by the large (or ammonia) chain to synthesize carbamoyl phosphate. Tetramer of heterodimers (alpha,beta)4. Mg(2+) serves as cofactor. The cofactor is Mn(2+).

It carries out the reaction hydrogencarbonate + L-glutamine + 2 ATP + H2O = carbamoyl phosphate + L-glutamate + 2 ADP + phosphate + 2 H(+). The enzyme catalyses hydrogencarbonate + NH4(+) + 2 ATP = carbamoyl phosphate + 2 ADP + phosphate + 2 H(+). It participates in amino-acid biosynthesis; L-arginine biosynthesis; carbamoyl phosphate from bicarbonate: step 1/1. It functions in the pathway pyrimidine metabolism; UMP biosynthesis via de novo pathway; (S)-dihydroorotate from bicarbonate: step 1/3. Functionally, large subunit of the glutamine-dependent carbamoyl phosphate synthetase (CPSase). CPSase catalyzes the formation of carbamoyl phosphate from the ammonia moiety of glutamine, carbonate, and phosphate donated by ATP, constituting the first step of 2 biosynthetic pathways, one leading to arginine and/or urea and the other to pyrimidine nucleotides. The large subunit (synthetase) binds the substrates ammonia (free or transferred from glutamine from the small subunit), hydrogencarbonate and ATP and carries out an ATP-coupled ligase reaction, activating hydrogencarbonate by forming carboxy phosphate which reacts with ammonia to form carbamoyl phosphate. This chain is Carbamoyl phosphate synthase large chain, found in Clostridium acetobutylicum (strain ATCC 824 / DSM 792 / JCM 1419 / IAM 19013 / LMG 5710 / NBRC 13948 / NRRL B-527 / VKM B-1787 / 2291 / W).